Here is a 344-residue protein sequence, read N- to C-terminus: Heptahelical transmembrane protein 3 (344 aa).

The Cytoplasmic segment spans residues Met-1–Asn-76. A helical membrane pass occupies residues Ile-77–Glu-97. At Thr-98–Pro-147 the chain is on the extracellular side. A helical transmembrane segment spans residues Trp-148–Leu-168. The Cytoplasmic segment spans residues Ala-169–Tyr-184. The chain crosses the membrane as a helical span at residues Ala-185–Cys-205. Over His-206–Arg-210 the chain is Extracellular. A helical membrane pass occupies residues Leu-211 to Pro-231. Over Ala-232–Asn-244 the chain is Cytoplasmic. Residues Leu-245–Trp-265 form a helical membrane-spanning segment. Topologically, residues Asp-266–Asn-269 are extracellular. Residues Val-270–Phe-290 traverse the membrane as a helical segment. Residues Tyr-291–Gln-312 are Cytoplasmic-facing. A helical membrane pass occupies residues Ile-313–Ile-333. At Asp-334–Phe-344 the chain is on the extracellular side.

The protein belongs to the ADIPOR family. Expressed in roots and flowers.

The protein localises to the membrane. In terms of biological role, may play a role in abiotic stress response. The polypeptide is Heptahelical transmembrane protein 3 (HHP3) (Arabidopsis thaliana (Mouse-ear cress)).